The sequence spans 265 residues: 4-hydroxy-tetrahydrodipicolinate reductase (265 aa).

Residues 7-12 (GASGRM) and aspartate 33 contribute to the NAD(+) site. Position 34 (arginine 34) interacts with NADP(+). Residues 96 to 98 (GTT) and 120 to 123 (ASNF) contribute to the NAD(+) site. Histidine 153 serves as the catalytic Proton donor/acceptor. Histidine 154 contacts (S)-2,3,4,5-tetrahydrodipicolinate. Residue lysine 157 is the Proton donor of the active site. 163–164 (GT) is a binding site for (S)-2,3,4,5-tetrahydrodipicolinate.

This sequence belongs to the DapB family.

The protein resides in the cytoplasm. It carries out the reaction (S)-2,3,4,5-tetrahydrodipicolinate + NAD(+) + H2O = (2S,4S)-4-hydroxy-2,3,4,5-tetrahydrodipicolinate + NADH + H(+). The catalysed reaction is (S)-2,3,4,5-tetrahydrodipicolinate + NADP(+) + H2O = (2S,4S)-4-hydroxy-2,3,4,5-tetrahydrodipicolinate + NADPH + H(+). It functions in the pathway amino-acid biosynthesis; L-lysine biosynthesis via DAP pathway; (S)-tetrahydrodipicolinate from L-aspartate: step 4/4. Its function is as follows. Catalyzes the conversion of 4-hydroxy-tetrahydrodipicolinate (HTPA) to tetrahydrodipicolinate. The protein is 4-hydroxy-tetrahydrodipicolinate reductase of Paraburkholderia phymatum (strain DSM 17167 / CIP 108236 / LMG 21445 / STM815) (Burkholderia phymatum).